Consider the following 681-residue polypeptide: DNA ligase (681 aa).

Residues 45-49 (DFDFD), 94-95 (SL), and Glu120 each bind NAD(+). The N6-AMP-lysine intermediate role is filled by Lys122. Residues Arg143, Glu177, Lys289, and Lys313 each coordinate NAD(+). Positions 403, 406, 421, and 426 each coordinate Zn(2+). A BRCT domain is found at 593–681 (SDQQPFAGQS…SLKINFKNTI (89 aa)).

This sequence belongs to the NAD-dependent DNA ligase family. LigA subfamily. Requires Mg(2+) as cofactor. Mn(2+) is required as a cofactor.

It catalyses the reaction NAD(+) + (deoxyribonucleotide)n-3'-hydroxyl + 5'-phospho-(deoxyribonucleotide)m = (deoxyribonucleotide)n+m + AMP + beta-nicotinamide D-nucleotide.. DNA ligase that catalyzes the formation of phosphodiester linkages between 5'-phosphoryl and 3'-hydroxyl groups in double-stranded DNA using NAD as a coenzyme and as the energy source for the reaction. It is essential for DNA replication and repair of damaged DNA. This chain is DNA ligase, found in Leptospira borgpetersenii serovar Hardjo-bovis (strain L550).